Here is a 585-residue protein sequence, read N- to C-terminus: Chaperonin CPN60-like 1, mitochondrial (585 aa).

The N-terminal 32 residues, 1–32, are a transit peptide targeting the mitochondrion; that stretch reads MYRLVSNVASKARIARKCTSQIGSRLNSTRNY.

Belongs to the chaperonin (HSP60) family.

It localises to the mitochondrion. In terms of biological role, implicated in mitochondrial protein import and macromolecular assembly. May facilitate the correct folding of imported proteins. May also prevent misfolding and promote the refolding and proper assembly of unfolded polypeptides generated under stress conditions in the mitochondrial matrix. The polypeptide is Chaperonin CPN60-like 1, mitochondrial (Arabidopsis thaliana (Mouse-ear cress)).